The sequence spans 467 residues: ATP synthase subunit beta (467 aa).

G156–T163 contributes to the ATP binding site.

It belongs to the ATPase alpha/beta chains family. F-type ATPases have 2 components, CF(1) - the catalytic core - and CF(0) - the membrane proton channel. CF(1) has five subunits: alpha(3), beta(3), gamma(1), delta(1), epsilon(1). CF(0) has three main subunits: a(1), b(2) and c(9-12). The alpha and beta chains form an alternating ring which encloses part of the gamma chain. CF(1) is attached to CF(0) by a central stalk formed by the gamma and epsilon chains, while a peripheral stalk is formed by the delta and b chains.

It is found in the cell inner membrane. The enzyme catalyses ATP + H2O + 4 H(+)(in) = ADP + phosphate + 5 H(+)(out). In terms of biological role, produces ATP from ADP in the presence of a proton gradient across the membrane. The catalytic sites are hosted primarily by the beta subunits. In Cupriavidus taiwanensis (strain DSM 17343 / BCRC 17206 / CCUG 44338 / CIP 107171 / LMG 19424 / R1) (Ralstonia taiwanensis (strain LMG 19424)), this protein is ATP synthase subunit beta.